A 159-amino-acid chain; its full sequence is Transcriptional repressor NrdR (159 aa).

Residues 3–34 (CPTCQNTDSRVLESRSADTGKSVRRRRECLNC) fold into a zinc finger. One can recognise an ATP-cone domain in the interval 49–139 (ISVLKKDGSR…VYRKFNGVKD (91 aa)).

It belongs to the NrdR family. Zn(2+) serves as cofactor.

Negatively regulates transcription of bacterial ribonucleotide reductase nrd genes and operons by binding to NrdR-boxes. In Prochlorococcus marinus (strain MIT 9515), this protein is Transcriptional repressor NrdR.